The chain runs to 198 residues: Ribonuclease HII (198 aa).

The region spanning 6–195 is the RNase H type-2 domain; the sequence is RRVAGVDEVG…VHHMLYQDKN (190 aa). Positions 12, 13, and 103 each coordinate a divalent metal cation.

This sequence belongs to the RNase HII family. Mn(2+) is required as a cofactor. It depends on Mg(2+) as a cofactor.

Its subcellular location is the cytoplasm. The enzyme catalyses Endonucleolytic cleavage to 5'-phosphomonoester.. Its function is as follows. Endonuclease that specifically degrades the RNA of RNA-DNA hybrids. In Roseobacter denitrificans (strain ATCC 33942 / OCh 114) (Erythrobacter sp. (strain OCh 114)), this protein is Ribonuclease HII.